The sequence spans 76 residues: ATP synthase subunit 9, mitochondrial (76 aa).

Methionine 1 carries the N-formylmethionine modification. Transmembrane regions (helical) follow at residues 14-34 (IATI…AALI) and 52-72 (ILGF…SFLL).

In terms of assembly, F-type ATP synthases have 2 components, the catalytic core F(1) and the membrane-embedded component F(0), linked together by a central stalk and a peripheral stalk. The central stalk, also called rotor shaft, is often seen as part of F(1). The peripheral stalk is seen as part of F(0). F(0) contains the membrane channel next to the rotor. F-type ATP synthases form dimers but each monomer functions independently in ATP generation. The dimer consists of 18 different polypeptides: ATP1 (subunit alpha, part of F(1), 3 molecules per monomer), ATP2 (subunit beta, part of F(1), 3 molecules per monomer), ATP3 (subunit gamma, part of the central stalk), ATP4 (subunit b, part of the peripheral stalk), ATP5/OSCP (subunit 5/OSCP, part of the peripheral stalk), ATP6 (subunit a, part of the peripheral stalk), ATP7 (subunit d, part of the peripheral stalk), ATP8 (subunit 8, part of the peripheral stalk), OLI1 (subunit c, part of the rotor, 10 molecules per monomer), ATP14 (subunit h, part of the peripheral stalk), ATP15 (subunit epsilon, part of the central stalk), ATP16 (subunit delta, part of the central stalk), ATP17 (subunit f, part of the peripheral stalk), ATP18 (subunit i/j, part of the peripheral stalk). Dimer-specific subunits are ATP19 (subunit k, at interface between monomers), ATP20 (subunit g, at interface between monomers), TIM11 (subunit e, at interface between monomers). Also contains subunit L.

It is found in the mitochondrion inner membrane. In terms of biological role, mitochondrial membrane ATP synthase (F(1)F(0) ATP synthase or Complex V) produces ATP from ADP in the presence of a proton gradient across the membrane which is generated by electron transport complexes of the respiratory chain. F-type ATP synthases consist of two structural domains, F(1) - containing the extramembraneous catalytic core, and F(0) - containing the membrane proton channel, linked together by a central stalk and a peripheral stalk. During catalysis, ATP synthesis in the catalytic domain of F(1) is coupled via a rotary mechanism of the central stalk subunits to proton translocation. Part of the complex F(0) domain. A homomeric c-ring of 10 OLI1/ATP9 subunits is part of the complex rotary element. The sequence is that of ATP synthase subunit 9, mitochondrial from Pichia angusta (Yeast).